Consider the following 458-residue polypeptide: Sphingoid long chain base kinase 4 (458 aa).

A DAGKc domain is found at 103 to 241; it reads KRSRRFIVFI…FDLMTFEQKG (139 aa). Residues 113 to 115 and threonine 145 each bind ATP; that span reads NPH. Substrate is bound at residue 170–173; it reads GGDG. The Proton donor/acceptor role is filled by aspartate 172. Residues glutamate 177, 202 to 204, arginine 266, arginine 272, and 426 to 428 each bind ATP; these read GSG and DGE.

Its subcellular location is the cell membrane. It localises to the endoplasmic reticulum membrane. The protein localises to the late endosome membrane. The protein resides in the golgi apparatus membrane. It catalyses the reaction a sphingoid base + ATP = a sphingoid 1-phosphate + ADP + H(+). Functionally, catalyzes the phosphorylation of the sphingoid long chain bases dihydrosphingosine (DHS) and phytosphingosine (PHS) to form dihydrosphingosine 1-phosphate (DHS-1P) and phytosphingosine 1-phosphate (PHS-1P) respectively. Involved in the biosynthesis of sphingolipids and ceramides. Involved in heat-induced transient cell cycle arrest. Accumulation of phosphorylated sphingoid long chain bases (LCBPs) stimulates calcium influx and activates calcineurin signaling. Involved in heat-stress resistance. The polypeptide is Sphingoid long chain base kinase 4 (lcb4) (Schizosaccharomyces pombe (strain 972 / ATCC 24843) (Fission yeast)).